Consider the following 290-residue polypeptide: UPF0761 membrane protein YihY (290 aa).

Over Met1–Ser43 the chain is Cytoplasmic. A helical membrane pass occupies residues Leu44 to Phe64. Topologically, residues Ser65–Ala103 are periplasmic. Residues Val104–Leu124 form a helical membrane-spanning segment. The Cytoplasmic segment spans residues Asn125–Ser139. Residues Phe140–Ile160 form a helical membrane-spanning segment. At Ser161–Asn179 the chain is on the periplasmic side. A helical transmembrane segment spans residues Val180–Val200. Residues Pro201–Asp209 lie on the Cytoplasmic side of the membrane. A helical membrane pass occupies residues Ala210–Leu230. The Periplasmic segment spans residues Tyr231–Gly243. Residues Val244–Leu264 form a helical membrane-spanning segment. Topologically, residues Gly265–Pro290 are cytoplasmic.

Belongs to the UPF0761 family.

The protein localises to the cell inner membrane. The chain is UPF0761 membrane protein YihY from Salmonella typhimurium (strain LT2 / SGSC1412 / ATCC 700720).